A 368-amino-acid polypeptide reads, in one-letter code: Nucleotide pyrophosphatase/phosphodiesterase (368 aa).

It belongs to the metallophosphoesterase superfamily. As to quaternary structure, monomer and homomer. In terms of processing, glycosylated.

It is found in the plastid. The protein resides in the chloroplast. Hydrolyzes pyrophosphate, phosphodiester and phosphosulfate linkages of nucleotide-sugars, sulfonucleotides and nucleoside di and triphosphates. Highest activity observed with the substrates ADP-glucose and adenosine 5'-phosphosulfate. The protein is Nucleotide pyrophosphatase/phosphodiesterase of Hordeum vulgare (Barley).